A 368-amino-acid polypeptide reads, in one-letter code: Abasic site processing protein YMR114C (368 aa).

The active-site Nucleophile is the cysteine 2. Cysteine 2 is subject to Thiazolidine linkage to a ring-opened DNA abasic site. The segment at valine 25–proline 48 is disordered. Residues histidine 37–aspartate 46 are compositionally biased toward basic and acidic residues. Glutamate 132 is a catalytic residue. The disordered stretch occupies residues leucine 270–lysine 368. Composition is skewed to basic and acidic residues over residues arginine 281 to asparagine 296, asparagine 304 to glutamate 313, and isoleucine 326 to asparagine 349. Serine 338 is modified (phosphoserine).

It belongs to the SOS response-associated peptidase family.

The protein localises to the chromosome. Formation and reversal of DNA-protein cross-link depends on DNA context. Catalyzes formation of the thiazolidine linkage in presence of abasic sites in single-stranded DNA. Mediates the reversal of the thiazolidine cross-link in presence of double stranded DNA. In terms of biological role, sensor of abasic sites in single-stranded DNA (ssDNA) required to preserve genome integrity by promoting error-free repair of abasic sites. Recognizes and binds abasic sites in ssDNA at replication forks and chemically modifies the lesion by forming a covalent cross-link with DNA: forms a stable thiazolidine linkage between a ring-opened abasic site and the alpha-amino and sulfhydryl substituents of its N-terminal catalytic cysteine residue. The DNA-protein cross-link is then reversed: able to catalyze the reversal of the thiazolidine cross-link and cycle between a cross-link and a non-cross-linked state depending on DNA context: mediates self-reversal of the thiazolidine cross-link in double stranded DNA. Acts as a protease: mediates autocatalytic processing of its N-terminal methionine in order to expose the catalytic cysteine. The polypeptide is Abasic site processing protein YMR114C (Saccharomyces cerevisiae (strain ATCC 204508 / S288c) (Baker's yeast)).